The primary structure comprises 215 residues: Glycerol-3-phosphate acyltransferase (215 aa).

Transmembrane regions (helical) follow at residues 3–23, 42–61, 68–90, 110–130, 134–154, and 162–182; these read LILLILTAYLLGSIPTGLWIG, TNTFRILGLKAGAATLLIDI, TLLPVLVGASNISPITIGFFAVL, AGVLLGFAPLYLLFLAAVFVL, LFSMISLASLTASVVAVISVL, and LLPSYDWLLTITIVVLAAIII.

The protein belongs to the PlsY family. Probably interacts with PlsX.

It localises to the cell membrane. It catalyses the reaction an acyl phosphate + sn-glycerol 3-phosphate = a 1-acyl-sn-glycero-3-phosphate + phosphate. It participates in lipid metabolism; phospholipid metabolism. In terms of biological role, catalyzes the transfer of an acyl group from acyl-phosphate (acyl-PO(4)) to glycerol-3-phosphate (G3P) to form lysophosphatidic acid (LPA). This enzyme utilizes acyl-phosphate as fatty acyl donor, but not acyl-CoA or acyl-ACP. The protein is Glycerol-3-phosphate acyltransferase of Streptococcus equi subsp. equi (strain 4047).